Consider the following 345-residue polypeptide: Eukaryotic translation initiation factor 3 subunit F (345 aa).

Residues 30–166 enclose the MPN domain; sequence VVIQPQALFS…TRAYISAPVG (137 aa). The disordered stretch occupies residues 308–345; it reads GGESGSTESGQRGGQRGGKGGRGGQQRNQERSGEEVRA. Gly residues predominate over residues 318 to 331; the sequence is QRGGQRGGKGGRGG. Over residues 335–345 the composition is skewed to basic and acidic residues; it reads NQERSGEEVRA.

It belongs to the eIF-3 subunit F family. In terms of assembly, component of the eukaryotic translation initiation factor 3 (eIF-3) complex.

The protein resides in the cytoplasm. Functionally, component of the eukaryotic translation initiation factor 3 (eIF-3) complex, which is involved in protein synthesis of a specialized repertoire of mRNAs and, together with other initiation factors, stimulates binding of mRNA and methionyl-tRNAi to the 40S ribosome. The eIF-3 complex specifically targets and initiates translation of a subset of mRNAs involved in cell proliferation. This Aspergillus terreus (strain NIH 2624 / FGSC A1156) protein is Eukaryotic translation initiation factor 3 subunit F.